The primary structure comprises 430 residues: Threonine synthase (430 aa).

Residue K108 is modified to N6-(pyridoxal phosphate)lysine.

The protein belongs to the threonine synthase family. Requires pyridoxal 5'-phosphate as cofactor.

It carries out the reaction O-phospho-L-homoserine + H2O = L-threonine + phosphate. The protein operates within amino-acid biosynthesis; L-threonine biosynthesis; L-threonine from L-aspartate: step 5/5. Functionally, catalyzes the gamma-elimination of phosphate from L-phosphohomoserine and the beta-addition of water to produce L-threonine. This Buchnera aphidicola subsp. Baizongia pistaciae (strain Bp) protein is Threonine synthase (thrC).